Reading from the N-terminus, the 197-residue chain is Glycerol-3-phosphate acyltransferase (197 aa).

5 consecutive transmembrane segments (helical) span residues 7–27, 55–75, 78–98, 116–136, and 157–177; these read TLLP…LILT, GLAA…VLIV, VWPG…CFPV, LALA…VLFL, and VLGY…VLYL.

Belongs to the PlsY family. Probably interacts with PlsX.

The protein resides in the cell inner membrane. The enzyme catalyses an acyl phosphate + sn-glycerol 3-phosphate = a 1-acyl-sn-glycero-3-phosphate + phosphate. It functions in the pathway lipid metabolism; phospholipid metabolism. Catalyzes the transfer of an acyl group from acyl-phosphate (acyl-PO(4)) to glycerol-3-phosphate (G3P) to form lysophosphatidic acid (LPA). This enzyme utilizes acyl-phosphate as fatty acyl donor, but not acyl-CoA or acyl-ACP. This Novosphingobium aromaticivorans (strain ATCC 700278 / DSM 12444 / CCUG 56034 / CIP 105152 / NBRC 16084 / F199) protein is Glycerol-3-phosphate acyltransferase.